Here is a 294-residue protein sequence, read N- to C-terminus: MEARNMTPFTYFSLPMQKLFLRNQAAVRNKPYAKYFRTEMRVPLSAVRKIQQGPMALEDTLTPSIEDINRLLEPDFVSEESGYALLPGPMAYVQSRKFFPGCTAQMFKWWFIWHPAESERYTLWFPYAHVSNPCVHHQRLCDESLSFEERLYGNTFCASEYVGDRLMHLHIDFQQPASLGLNTDLYREAKIDGSVSALMSLADHPEVPVSLMVHLFKEVPGGMYLTSRYWVGAHPSMARFPGAEKAASLLKENGFGEAELETLAYEFAVHDMCEFNHLASFLPDLYREFGTPAA.

Positions 129, 160, 270, and 274 each coordinate Zn(2+).

This sequence belongs to the DAPG/phloretin hydrolase family. Homodimer. It depends on Zn(2+) as a cofactor.

The catalysed reaction is 2,4-diacetylphloroglucinol + H2O = 2-acetylphloroglucinol + acetate. Specifically and significantly activated by CoCl(2). Competitively inhibited by MAPG, but not by 2-hydroxy- and 4-hydroxyacetophenone. Hydrolase that specifically degrades the potent antimicrobial compound 2,4-diacetylphloroglucinol (DAPG) to equimolar amounts of mildly toxic monoacetylphloroglucinol (MAPG) and acetate. The sequence is that of 2,4-diacetylphloroglucinol hydrolase from Pseudomonas sp.